The primary structure comprises 262 residues: Probable DNA polymerase sliding clamp 1 (262 aa).

Residues 67–86 (KCEHTYELGVNVLNMFKLLR) mediate DNA binding.

It belongs to the PCNA family.

Functionally, sliding clamp subunit. Responsible for tethering the catalytic subunit of DNA polymerase to DNA during high-speed replication. The protein is Probable DNA polymerase sliding clamp 1 of Chlorella (PBCV-1).